Reading from the N-terminus, the 568-residue chain is Protein downstream neighbor of son homolog (568 aa).

Disordered stretches follow at residues 28–48 (NKLA…QVDE) and 311–355 (MPLK…DDDE). Over residues 315–335 (SDNSGNAHDNSFNEESTTTSL) the composition is skewed to polar residues.

This sequence belongs to the DONSON family. In terms of tissue distribution, expression peaks during late G1 and S phase (at protein level).

The protein resides in the nucleus. Functionally, essential for DNA amplification in the ovary and required for cell proliferation during development. This is Protein downstream neighbor of son homolog (hd) from Drosophila melanogaster (Fruit fly).